The primary structure comprises 308 residues: Ribosomal RNA small subunit methyltransferase H (308 aa).

S-adenosyl-L-methionine-binding positions include glycine 33 to histidine 35, aspartate 52, phenylalanine 78, aspartate 99, and glutamine 106. A disordered region spans residues glutamate 289–leucine 308.

Belongs to the methyltransferase superfamily. RsmH family.

The protein localises to the cytoplasm. The enzyme catalyses cytidine(1402) in 16S rRNA + S-adenosyl-L-methionine = N(4)-methylcytidine(1402) in 16S rRNA + S-adenosyl-L-homocysteine + H(+). Specifically methylates the N4 position of cytidine in position 1402 (C1402) of 16S rRNA. In Thermoanaerobacter sp. (strain X514), this protein is Ribosomal RNA small subunit methyltransferase H.